The chain runs to 178 residues: Fatty-acid and retinol-binding protein 1 (178 aa).

An N-terminal signal peptide occupies residues Met-1–Ala-16. Coiled-coil stretches lie at residues Asp-67–Asn-89 and Lys-130–Val-153.

The protein belongs to the fatty-acid and retinol-binding protein (FARBP) family. Not glycosylated.

It localises to the secreted. In terms of biological role, binds retinol. Also binds the fluorescent fatty acid 11-((5-dimethylaminonaphthalene-1-sulfonyl)amino)undecanoic acid (DAUDA). The long chain fatty acid oleic acid can act competitively to displace bound DAUDA and retinol. In Brugia malayi (Filarial nematode worm), this protein is Fatty-acid and retinol-binding protein 1.